The primary structure comprises 719 residues: Leucine-rich repeat and fibronectin type-III domain-containing protein 5 (719 aa).

Positions 1–17 are cleaved as a signal peptide; sequence MEKFLFYLFLIGIAVRA. One can recognise an LRRNT domain in the interval 18–51; that stretch reads QICPKRCVCQILSPNLATLCAKKGLLFVPPNIDR. The Extracellular segment spans residues 18-529; it reads QICPKRCVCQ…MQSQFLGGTM (512 aa). 7 LRR repeats span residues 52–73, 76–97, 100–121, 124–145, 148–169, 172–193, and 196–217; these read RTVELRLADNFVTNIKRKDFAN, SLVDLTLSRNTISFITPHAFAD, NLRALHLNSNRLTKITNDMFSG, NLHHLILNNNQLTLISSTAFDD, ALEELDLSYNNLETIPWDAVEK, SLHTLSLDHNMIDNIPKGTFSH, and KMTRLDVTSNKLQKLPPDPLFQ. Asn-73 carries N-linked (GlcNAc...) asparagine glycosylation. In terms of domain architecture, LRRCT spans 240–286; sequence NPLHCNCELLWLRRLSREDDLETCASPALLTGRYFWSIPEEEFLCEP. One can recognise an Ig-like domain in the interval 287-373; sequence PLITRHTHEM…GEATQTVDLH (87 aa). Cys-308 and Cys-357 are oxidised to a cystine. N-linked (GlcNAc...) asparagine glycans are attached at residues Asn-330, Asn-339, Asn-382, Asn-406, and Asn-452. The interval 385–416 is disordered; sequence NHIHEPDPGSSDISTSTKSGSNASSSNGDTKM. A compositionally biased stretch (low complexity) spans 393–412; it reads GSSDISTSTKSGSNASSSNG. Residues 414 to 503 form the Fibronectin type-III domain; sequence TKMSQDKIVV…ITSLTATRVV (90 aa). The chain crosses the membrane as a helical span at residues 530–550; that stretch reads IIIIGGIIVASVLVFIIILMI. Residues 551–719 are Cytoplasmic-facing; it reads RYKVCNNNGQ…VQETQRLESI (169 aa). Residues 614–627 are compositionally biased toward low complexity; it reads SETCSSQDSSTTTS. Residues 614–719 form a disordered region; it reads SETCSSQDSS…VQETQRLESI (106 aa). Polar residues-rich tracts occupy residues 628 to 641, 654 to 677, and 702 to 713; these read ALPPTWTSSAPVSQ, EPQSEAVTNVESQNTNRNNSTALQ, and LLTNVDQNVQET.

This sequence belongs to the LRFN family. In terms of assembly, can form heteromeric complexes with LRFN1, LRFN2, LRFN3 and LFRN4. Able to form homomeric complexes across cell junctions, between adjacent cells. Does not interact with DLG1, DLG2 or DLG3. Does not interact with DLG4. In terms of processing, glycosylated. Predominantly expressed in the brain, with a weak, but broad expression in the cerebral cortex and diencephalic nuclei. Strongly expressed in both the pyramidal layer and the dentate gyrus of the hippocampus. Also detected in other parts of the central nervous system, including the olfactory bulb, pons, cerebellum, and medulla oblongata, as well as in the peripheral nervous system, such as the ganglia of cranial nerves and the dorsal root ganglion during gestation.

It localises to the membrane. Its function is as follows. Cell adhesion molecule that mediates homophilic cell-cell adhesion in a Ca(2+)-independent manner. Promotes neurite outgrowth in hippocampal neurons. The protein is Leucine-rich repeat and fibronectin type-III domain-containing protein 5 (Lrfn5) of Mus musculus (Mouse).